The chain runs to 91 residues: UPF0250 protein NMA1380 (91 aa).

Belongs to the UPF0250 family.

This is UPF0250 protein NMA1380 from Neisseria meningitidis serogroup A / serotype 4A (strain DSM 15465 / Z2491).